Reading from the N-terminus, the 820-residue chain is Probable protease Ga0182885_104520 (820 aa).

The protein belongs to the peptidase C25 family.

Probably a dedicated protease for substrate gasdermin bGSDM; cleaves the bGSDM precursor, releasing the pore-forming moiety, which integrates into the membrane and triggers cell death. Involved in defense against bacteriophages. Expression of bacterial gasdermin (bGSDM) and this neighboring protease is toxic in E.coli. The chain is Probable protease Ga0182885_104520 from Desulfuromonadales bacterium.